Here is a 270-residue protein sequence, read N- to C-terminus: Phosphatidylglycerol--prolipoprotein diacylglyceryl transferase (270 aa).

4 consecutive transmembrane segments (helical) span residues 18–38, 55–75, 89–109, and 115–135; these read IAVHWYGIIIGLGALLGLWLA, LVLFAIPIAILCARAYYVIFQ, IWNGGLAIHGGLIGAVLTGII, and GLSFWKLADIAAPSILLGQAI. An a 1,2-diacyl-sn-glycero-3-phospho-(1'-sn-glycerol)-binding site is contributed by Arg137. The next 3 helical transmembrane spans lie at 177–197, 205–225, and 236–256; these read QPTFLYESLWSFTGVVVLLLL, GELFLIYVIWYSMGRYFIEGL, and LRIAQVISIVLILCAAALIAY.

Belongs to the Lgt family.

It is found in the cell membrane. It carries out the reaction L-cysteinyl-[prolipoprotein] + a 1,2-diacyl-sn-glycero-3-phospho-(1'-sn-glycerol) = an S-1,2-diacyl-sn-glyceryl-L-cysteinyl-[prolipoprotein] + sn-glycerol 1-phosphate + H(+). It functions in the pathway protein modification; lipoprotein biosynthesis (diacylglyceryl transfer). Catalyzes the transfer of the diacylglyceryl group from phosphatidylglycerol to the sulfhydryl group of the N-terminal cysteine of a prolipoprotein, the first step in the formation of mature lipoproteins. In Bacillus licheniformis (strain ATCC 14580 / DSM 13 / JCM 2505 / CCUG 7422 / NBRC 12200 / NCIMB 9375 / NCTC 10341 / NRRL NRS-1264 / Gibson 46), this protein is Phosphatidylglycerol--prolipoprotein diacylglyceryl transferase.